Here is a 283-residue protein sequence, read N- to C-terminus: 4-diphosphocytidyl-2-C-methyl-D-erythritol kinase (283 aa).

The active site involves Lys12. ATP is bound at residue 94–104 (PAQAGLGGGSS). Asp136 is an active-site residue.

It belongs to the GHMP kinase family. IspE subfamily.

It carries out the reaction 4-CDP-2-C-methyl-D-erythritol + ATP = 4-CDP-2-C-methyl-D-erythritol 2-phosphate + ADP + H(+). It participates in isoprenoid biosynthesis; isopentenyl diphosphate biosynthesis via DXP pathway; isopentenyl diphosphate from 1-deoxy-D-xylulose 5-phosphate: step 3/6. Catalyzes the phosphorylation of the position 2 hydroxy group of 4-diphosphocytidyl-2C-methyl-D-erythritol. The polypeptide is 4-diphosphocytidyl-2-C-methyl-D-erythritol kinase (Acidovorax sp. (strain JS42)).